Reading from the N-terminus, the 231-residue chain is MNKQLPLPIHQIDDATLENFYGDNNLLLLDSLRKNSSDLKQPFFYIWGDKGSGKTHLLRAFSNEYLINQRTAIYVPLSKSQYFSTAVLENLEQQELVCLDDLQSVIGNDEWELAIFDLFNRIKASGKTLLLISADKSPSALSVKLPDLNSRLTWGEIYQLNSLTDEQKIKVLQLAAYQRGFQLSDETANFLITRLARDMHTLFEALDLLDKASLQAQRNLTIPFVKKILNL.

This sequence belongs to the DnaA family. HdA subfamily.

This is an uncharacterized protein from Haemophilus influenzae (strain ATCC 51907 / DSM 11121 / KW20 / Rd).